Here is a 244-residue protein sequence, read N- to C-terminus: Carboxy-S-adenosyl-L-methionine synthase (244 aa).

S-adenosyl-L-methionine-binding positions include tyrosine 40, 65–67, 90–91, 119–120, asparagine 134, and arginine 201; these read GCS, DN, and DL.

It belongs to the class I-like SAM-binding methyltransferase superfamily. Cx-SAM synthase family. As to quaternary structure, homodimer.

The catalysed reaction is prephenate + S-adenosyl-L-methionine = carboxy-S-adenosyl-L-methionine + 3-phenylpyruvate + H2O. Its function is as follows. Catalyzes the conversion of S-adenosyl-L-methionine (SAM) to carboxy-S-adenosyl-L-methionine (Cx-SAM). In Geobacter metallireducens (strain ATCC 53774 / DSM 7210 / GS-15), this protein is Carboxy-S-adenosyl-L-methionine synthase.